A 283-amino-acid chain; its full sequence is Non-selective voltage-gated ion channel VDAC1 (283 aa).

Alanine 2 is subject to N-acetylalanine. Lysine 12 lines the ATP pocket. Lysine 12 participates in a covalent cross-link: Glycyl lysine isopeptide (Lys-Gly) (interchain with G-Cter in ubiquitin). Position 13 is a phosphoserine (serine 13). The residue at position 19 (threonine 19) is a Phosphothreonine. Lysine 20 is a binding site for ATP. Lysine 20 is subject to N6-acetyllysine; alternate. Residue lysine 20 is modified to N6-succinyllysine; alternate. A Glycyl lysine isopeptide (Lys-Gly) (interchain with G-Cter in ubiquitin); alternate cross-link involves residue lysine 20. A run of 2 beta stranded transmembrane segments spans residues 26–35 (LIKLDLKTKS) and 39–47 (LEFTSSGSA). Glycyl lysine isopeptide (Lys-Gly) (interchain with G-Cter in ubiquitin) cross-links involve residues lysine 53 and lysine 61. The beta stranded transmembrane segment at 54 to 64 (VTGSLETKYRW) threads the bilayer. At tyrosine 67 the chain carries Phosphotyrosine. 3 beta stranded membrane passes run 69-76 (LTFTEKWN), 80-89 (TLGTEITVED), and 95-104 (LKLTFDSSFS). Threonine 107 carries the post-translational modification Phosphothreonine. Residue lysine 109 is modified to N6-acetyllysine; alternate. Lysine 109 is covalently cross-linked (Glycyl lysine isopeptide (Lys-Gly) (interchain with G-Cter in ubiquitin); alternate). Lysine 110 participates in a covalent cross-link: Glycyl lysine isopeptide (Lys-Gly) (interchain with G-Cter in ubiquitin). The next 4 beta stranded transmembrane spans lie at 111 to 120 (NAKIKTGYKR), 123 to 130 (VNLGCDVD), 137 to 145 (SIRGALVLG), and 150 to 158 (LAGYQMNFE). Lysine 161 participates in a covalent cross-link: Glycyl lysine isopeptide (Lys-Gly) (interchain with G-Cter in ubiquitin). 6 beta stranded membrane-spanning segments follow: residues 163-175 (RVTQSNFAVGYKT), 178-185 (FQLHTNVN), 189-198 (EFGGSIYQKV), 202-211 (LETAVNLAWT), 218-227 (RFGIAAKYQI), and 231-238 (ACFSAKVN). Serine 193 bears the Phosphoserine; by NEK1 mark. A Phosphoserine modification is found at serine 240. Residue 242–244 (LIG) coordinates NAD(+). The beta stranded transmembrane segment at 242-251 (LIGLGYTQTL) threads the bilayer. Lysine 252 is subject to N6-acetyllysine. The chain crosses the membrane as a beta stranded span at residues 254–263 (GIKLTLSALL). Position 260 to 264 (260 to 264 (SALLD)) interacts with NAD(+). Lysine 266 is subject to N6-acetyllysine; alternate. Lysine 266 participates in a covalent cross-link: Glycyl lysine isopeptide (Lys-Gly) (interchain with G-Cter in ubiquitin); alternate. Residues 273-282 (HKLGLGLEFQ) traverse the membrane as a beta stranded segment. Residue lysine 274 forms a Glycyl lysine isopeptide (Lys-Gly) (interchain with G-Cter in ubiquitin) linkage.

The protein belongs to the eukaryotic mitochondrial porin family. As to quaternary structure, homodimer and homotrimer; in response to cyclic AMP or calcium; oligomerization is required for scramblase activity. Component of the mitochondrial permeability transition pore complex (mPTPC), at least composed of SPG7, VDAC1 and PPIF. Interacts with SPG7, NIPSNAP2 and SLC25A30. Interacts with hexokinases including HK1. The HK1-VDAC1 complex interacts with ATF2. Interacts with BCL2L1. Interacts with BAK1. Interacts with RTL10/BOP (via BH3 domain). Interacts with amyloid-beta and APP; induces VDAC1 dephosphorylation. Interacts with TMEM41B. Interacts with BCAP31. Interacts with HSPA9; this interaction couples ITPR1 to VDAC1. Post-translationally, phosphorylation at Ser-193 by NEK1 promotes the closed conformational state preventing excessive mitochondrial membrane permeability and subsequent apoptotic cell death after injury. Phosphorylation by the AKT-GSK3B axis stabilizes the protein probably by preventing ubiquitin-mediated proteasomal degradation. In terms of processing, ubiquitinated. Undergoes monoubiquitination and polyubiquitination by PRKN; monoubiquitination at Lys-274 inhibits apoptosis, whereas polyubiquitination leads to its degradation and promotes mitophagy. Deubiquitinated by USP30.

Its subcellular location is the mitochondrion outer membrane. It localises to the cell membrane. The protein localises to the membrane raft. The enzyme catalyses chloride(in) = chloride(out). It carries out the reaction K(+)(in) = K(+)(out). The catalysed reaction is ATP(in) = ATP(out). It catalyses the reaction Ca(2+)(in) = Ca(2+)(out). The enzyme catalyses Na(+)(in) = Na(+)(out). It carries out the reaction Mg(2+)(in) = Mg(2+)(out). The catalysed reaction is L-glutamate(out) = L-glutamate(in). It catalyses the reaction dopamine(out) = dopamine(in). The enzyme catalyses acetylcholine(in) = acetylcholine(out). It carries out the reaction Fe(III)-[cytochrome c](out) = Fe(III)-[cytochrome c](in). The catalysed reaction is a 1,2-diacyl-sn-glycero-3-phosphocholine(in) = a 1,2-diacyl-sn-glycero-3-phosphocholine(out). It catalyses the reaction a 1,2-diacyl-sn-glycero-3-phospho-L-serine(in) = a 1,2-diacyl-sn-glycero-3-phospho-L-serine(out). Its activity is regulated as follows. Inhibited by nitric oxide. Non-selective voltage-gated ion channel that mediates the transport of anions and cations through the mitochondrion outer membrane and plasma membrane. The channel at the outer mitochondrial membrane allows diffusion of small hydrophilic molecules; in the plasma membrane it is involved in cell volume regulation and apoptosis. It adopts an open conformation at low or zero membrane potential and a closed conformation at potentials above 30-40 mV. The open state has a weak anion selectivity whereas the closed state is cation-selective. Binds various signaling molecules, including the sphingolipid ceramide, the phospholipid phosphatidylcholine, and the sterols cholesterol and oxysterol. In depolarized mitochondria, acts downstream of PRKN and PINK1 to promote mitophagy or prevent apoptosis; polyubiquitination by PRKN promotes mitophagy, while monoubiquitination by PRKN decreases mitochondrial calcium influx which ultimately inhibits apoptosis. May participate in the formation of the permeability transition pore complex (PTPC) responsible for the release of mitochondrial products that triggers apoptosis. May mediate ATP export from cells. Part of a complex composed of HSPA9, ITPR1 and VDAC1 that regulates mitochondrial calcium-dependent apoptosis by facilitating calcium transport from the ER lumen to the mitochondria intermembrane space thus providing calcium for the downstream calcium channel MCU that directly releases it into mitochondria matrix. Mediates cytochrome c efflux. Its function is as follows. Catalyzes the scrambling of phospholipids across the outer mitochondrial membrane; the mechanism is unrelated to channel activity and is capable of translocating both anionic and zwitterionic phospholipids. The sequence is that of Non-selective voltage-gated ion channel VDAC1 from Sus scrofa (Pig).